A 304-amino-acid polypeptide reads, in one-letter code: Quorum-quenching protein AidA (304 aa).

This sequence belongs to the AB hydrolase superfamily.

In terms of biological role, involved in quorum quenching (QQ). Inhibits motility and biofilm formation. Could contribute in bacterial competition, as it is capable of hydrolyzing the signaling molecules that mediate interspecies communication. The polypeptide is Quorum-quenching protein AidA (Acinetobacter baumannii (strain MDR-ZJ06)).